The chain runs to 485 residues: Sulfate adenylyltransferase subunit 1 (485 aa).

Residues 30–243 (KGLLRFLTCG…ELLETIDTQR (214 aa)) enclose the tr-type G domain. The segment at 39-46 (GSVDDGKS) is G1. Residue 39–46 (GSVDDGKS) coordinates GTP. A G2 region spans residues 97 to 101 (GITID). A G3 region spans residues 118 to 121 (DTPG). Residues 118-122 (DTPGH) and 173-176 (NKMD) each bind GTP. Positions 173 to 176 (NKMD) are G4. Positions 210–212 (SAL) are G5.

The protein belongs to the TRAFAC class translation factor GTPase superfamily. Classic translation factor GTPase family. CysN/NodQ subfamily. Heterodimer composed of CysD, the smaller subunit, and CysN.

It catalyses the reaction sulfate + ATP + H(+) = adenosine 5'-phosphosulfate + diphosphate. It participates in sulfur metabolism; hydrogen sulfide biosynthesis; sulfite from sulfate: step 1/3. Its function is as follows. With CysD forms the ATP sulfurylase (ATPS) that catalyzes the adenylation of sulfate producing adenosine 5'-phosphosulfate (APS) and diphosphate, the first enzymatic step in sulfur assimilation pathway. APS synthesis involves the formation of a high-energy phosphoric-sulfuric acid anhydride bond driven by GTP hydrolysis by CysN coupled to ATP hydrolysis by CysD. The chain is Sulfate adenylyltransferase subunit 1 from Shewanella oneidensis (strain ATCC 700550 / JCM 31522 / CIP 106686 / LMG 19005 / NCIMB 14063 / MR-1).